The sequence spans 372 residues: N-methyl-L-tryptophan oxidase (372 aa).

4 to 34 (DLIIIGSGSVGAAAGYYATRAGLNVLMTDAH) serves as a coordination point for FAD. An S-8alpha-FAD cysteine modification is found at Cys308.

The protein belongs to the MSOX/MTOX family. MTOX subfamily. In terms of assembly, monomer. It depends on FAD as a cofactor.

It carries out the reaction N(alpha)-methyl-L-tryptophan + O2 + H2O = L-tryptophan + formaldehyde + H2O2. In terms of biological role, catalyzes the oxidative demethylation of N-methyl-L-tryptophan. This is N-methyl-L-tryptophan oxidase from Shigella dysenteriae serotype 1 (strain Sd197).